Here is a 261-residue protein sequence, read N- to C-terminus: Carboxy-terminal domain RNA polymerase II polypeptide A small phosphatase 1 (261 aa).

Met-1 is subject to N-acetylmethionine. Positions 1-10 (MDSSAVITQI) are enriched in polar residues. The segment at 1-33 (MDSSAVITQISKEEARGPLRGKGDQKSAASQKP) is disordered. Residues 11-25 (SKEEARGPLRGKGDQ) are compositionally biased toward basic and acidic residues. Positions 86 to 244 (QDSDKICVVI…HDLLPFFEQL (159 aa)) constitute an FCP1 homology domain. Asp-96 (4-aspartylphosphate intermediate) is an active-site residue. 3 residues coordinate Mg(2+): Asp-96, Asp-98, and Asn-207. Asp-98 serves as the catalytic Proton donor.

Monomer. Interacts with GTF2F1. Interacts with REST. The cofactor is Mg(2+). In terms of tissue distribution, expression is restricted to non-neuronal tissues. Highest expression in skeletal muscle, spleen, lung and placenta.

It is found in the nucleus. The catalysed reaction is O-phospho-L-seryl-[protein] + H2O = L-seryl-[protein] + phosphate. It carries out the reaction O-phospho-L-threonyl-[protein] + H2O = L-threonyl-[protein] + phosphate. Stimulated by GTF2F1. Inhibited by beryllofluoride anions. Functionally, preferentially catalyzes the dephosphorylation of 'Ser-5' within the tandem 7 residue repeats in the C-terminal domain (CTD) of the largest RNA polymerase II subunit POLR2A. Negatively regulates RNA polymerase II transcription, possibly by controlling the transition from initiation/capping to processive transcript elongation. Recruited by REST to neuronal genes that contain RE-1 elements, leading to neuronal gene silencing in non-neuronal cells. The sequence is that of Carboxy-terminal domain RNA polymerase II polypeptide A small phosphatase 1 (CTDSP1) from Homo sapiens (Human).